The primary structure comprises 896 residues: Translation initiation factor IF-2 (896 aa).

2 disordered regions span residues 53–81 and 117–301; these read HGGESAPTKMTLQRKSVSTLSVGSGSASK and AEEA…ESMD. The segment covering 60–79 has biased composition (polar residues); that stretch reads TKMTLQRKSVSTLSVGSGSA. Positions 117 to 227 are enriched in basic and acidic residues; sequence AEEAASKAKA…ESEKTGDHHV (111 aa). Low complexity predominate over residues 254 to 266; it reads ATPAPAAAPANTG. The span at 273 to 282 shows a compositional bias: basic and acidic residues; it reads GKDNRRDSRN. The span at 283 to 294 shows a compositional bias: low complexity; sequence ARGGRNARNNRS. A tr-type G domain is found at 394-563; the sequence is SRAPVVTIMG…LLEAEVLELK (170 aa). Residues 403-410 are G1; it reads GHVDHGKT. 403–410 serves as a coordination point for GTP; that stretch reads GHVDHGKT. A G2 region spans residues 428–432; it reads GITQH. The G3 stretch occupies residues 449-452; it reads DTPG. Residues 449-453 and 503-506 each bind GTP; these read DTPGH and NKID. Positions 503–506 are G4; that stretch reads NKID. Positions 539-541 are G5; sequence SAK.

This sequence belongs to the TRAFAC class translation factor GTPase superfamily. Classic translation factor GTPase family. IF-2 subfamily.

It is found in the cytoplasm. One of the essential components for the initiation of protein synthesis. Protects formylmethionyl-tRNA from spontaneous hydrolysis and promotes its binding to the 30S ribosomal subunits. Also involved in the hydrolysis of GTP during the formation of the 70S ribosomal complex. The polypeptide is Translation initiation factor IF-2 (Shewanella sediminis (strain HAW-EB3)).